The primary structure comprises 228 residues: UPF0758 protein SAB1521c (228 aa).

One can recognise an MPN domain in the interval Lys102 to Phe224. Residues His173, His175, and Asp186 each contribute to the Zn(2+) site. The short motif at His173–Asp186 is the JAMM motif element.

The protein belongs to the UPF0758 family.

The sequence is that of UPF0758 protein SAB1521c from Staphylococcus aureus (strain bovine RF122 / ET3-1).